The primary structure comprises 157 residues: uncharacterized protein (157 aa).

A signal peptide spans 1-23 (MEALRRAHEATLRLLLCRPWASG).

Its subcellular location is the secreted. This is an uncharacterized protein from Mus musculus (Mouse).